The sequence spans 513 residues: Putative ribose/galactose/methyl galactoside import ATP-binding protein (513 aa).

2 ABC transporter domains span residues 24-260 (LSAE…VGRE) and 270-510 (VPIG…VMEL). 56-63 (GENGAGKS) provides a ligand contact to ATP.

This sequence belongs to the ABC transporter superfamily. Carbohydrate importer 2 (CUT2) (TC 3.A.1.2) family.

It is found in the cell inner membrane. It catalyses the reaction D-ribose(out) + ATP + H2O = D-ribose(in) + ADP + phosphate + H(+). The catalysed reaction is D-galactose(out) + ATP + H2O = D-galactose(in) + ADP + phosphate + H(+). In terms of biological role, part of an ABC transporter complex involved in carbohydrate import. Could be involved in ribose, galactose and/or methyl galactoside import. Responsible for energy coupling to the transport system. This Rhizobium johnstonii (strain DSM 114642 / LMG 32736 / 3841) (Rhizobium leguminosarum bv. viciae) protein is Putative ribose/galactose/methyl galactoside import ATP-binding protein.